A 265-amino-acid chain; its full sequence is 5'-nucleotidase SurE (265 aa).

A divalent metal cation is bound by residues Asp-8, Asp-9, Ser-40, and Asn-98.

It belongs to the SurE nucleotidase family. The cofactor is a divalent metal cation.

It localises to the cytoplasm. It catalyses the reaction a ribonucleoside 5'-phosphate + H2O = a ribonucleoside + phosphate. In terms of biological role, nucleotidase that shows phosphatase activity on nucleoside 5'-monophosphates. In Nostoc sp. (strain PCC 7120 / SAG 25.82 / UTEX 2576), this protein is 5'-nucleotidase SurE.